The sequence spans 465 residues: Mothers against decapentaplegic homolog 5 (465 aa).

Thr2 is subject to N-acetylthreonine. The region spanning 13 to 137 is the MH1 domain; sequence PAVKRLLGWK…YKRVESPVLP (125 aa). 4 residues coordinate Zn(2+): Cys65, Cys110, Cys122, and His127. The disordered stretch occupies residues 163-249; that stretch reads NEPHMPQNAT…PMDTSNNMIP (87 aa). Residues 169–182 are compositionally biased toward polar residues; that stretch reads QNATFPDSFHQPNN. The span at 186–197 shows a compositional bias: pro residues; sequence PLSPNSPYPPSP. Over residues 198 to 214 the composition is skewed to low complexity; the sequence is ASSTYPNSPASSGPGSP. Residues 234-249 show a composition bias toward polar residues; sequence GQDNSQPMDTSNNMIP. Residues 271-465 enclose the MH2 domain; that stretch reads WCSIVYYELN…SPLNPISSVS (195 aa). Phosphoserine occurs at positions 463 and 465.

This sequence belongs to the dwarfin/SMAD family. In terms of assembly, homodimer. Forms trimers with the co-SMAD SMAD4. Interacts with PEBP2-alpha subunit and SMURF1. Interacts with SUV39H1 and SUV39H2. Interacts (via MH2 domain) with LEMD3. Interacts with WWP1. Interacts with TMEM119. Interacts with ZNF8. Interacts with RANBP3L. Interacts with HK1. Interacts with HGS; this interaction attenuates BMP signaling. Phosphorylated on serine by BMP (bone morphogenetic proteins) type 1 receptor kinase. Post-translationally, ubiquitin-mediated proteolysis by SMAD-specific E3 ubiquitin ligase SMURF1. In terms of tissue distribution, ubiquitous.

Its subcellular location is the cytoplasm. It is found in the nucleus. It localises to the mitochondrion. Its function is as follows. Transcriptional regulator that plays a role in various cellular processes including embryonic development, cell differentiation, angiogenesis and tissue homeostasis. Upon BMP ligand binding to their receptors at the cell surface, is phosphorylated by activated type I BMP receptors (BMPRIs) and associates with SMAD4 to form a heteromeric complex which translocates into the nucleus acting as transcription factor. In turn, the hetero-trimeric complex recognizes cis-regulatory elements containing Smad Binding Elements (SBEs) to modulate the outcome of the signaling network. Non-phosphorylated SMAD5 has a cytoplasmic role in energy metabolism regulation by promoting mitochondrial respiration and glycolysis in response to cytoplasmic pH changes. Mechanistically, interacts with hexokinase 1/HK1 and thereby accelerates glycolysis. The chain is Mothers against decapentaplegic homolog 5 (SMAD5) from Homo sapiens (Human).